The primary structure comprises 111 residues: uncharacterized protein (111 aa).

4 consecutive transmembrane segments (helical) span residues 4-21, 28-47, 51-73, and 80-102; these read FITA…FVSF, LVYF…YMIY, TGIR…VTAF, and SFFF…YLGM.

It localises to the cell membrane. This is an uncharacterized protein from Bacillus subtilis (strain 168).